Here is a 217-residue protein sequence, read N- to C-terminus: MTQTSPSRLHSPLDRLLVEAQRALDTVFGNPPAERPNPAADTPDIALDPEQRRHAAGLMRINHVGEVCAQGLYFGQAAVARDAHTQHHLLEAAQEETDHLAWCADRLHELDSRPSLLNPLWYAGSYALGALAGLRGDDWSLGFVVETERQVEAHLDEHLETLPDIDQRSRAILRVMKIDEARHADQAEQAGARQLPAPIPGAMALASKLMKTVAYRL.

The Fe cation site is built by glutamate 66, glutamate 96, histidine 99, glutamate 148, glutamate 180, and histidine 183.

It belongs to the COQ7 family. Fe cation serves as cofactor.

The protein resides in the cell membrane. It carries out the reaction a 5-methoxy-2-methyl-3-(all-trans-polyprenyl)benzene-1,4-diol + AH2 + O2 = a 3-demethylubiquinol + A + H2O. It functions in the pathway cofactor biosynthesis; ubiquinone biosynthesis. In terms of biological role, catalyzes the hydroxylation of 2-nonaprenyl-3-methyl-6-methoxy-1,4-benzoquinol during ubiquinone biosynthesis. The protein is 3-demethoxyubiquinol 3-hydroxylase of Xanthomonas oryzae pv. oryzae (strain MAFF 311018).